A 510-amino-acid polypeptide reads, in one-letter code: MAAGLAITSEGGQYNGRMTSFVALSCMMAAMGGVIFGYDIGVSGGVTSMDPFLKKFFPDVYRKMKEDTEISNYCKFDSQLLTSFTSSLYVAGLVASFFASSVTRAFGRKPSILLGGXVFLAXAALGGAAVNVYMLIFGRVLLGVGVGFANQAVPLYLSEMAPPRYRGAINNGFQFSVGIGALSANLINYGTEKIEGGWGWRISLAMAAVPAAILTFGALFLPETPNSLIQRSNDHERAKLMLQRVRGTTDVQAELDDLIKASIISRTIQHPFKNIMRRKYRPQLVMAVAIPFFQQVTGINVIAFYAPILFRTIGLEESASLLSSIVTGLVGSASTFISMLIVDKLGRRALFIFGGVQMFVAQIMVGSIMAAELGDHGGIGKGYAYIVLILICIYVAGFGWSWGPLGWLVPSEIFPLEIRSAGQSIVVAVSFLFTFVVAQTFLSMLCHFKSGIFFFFGGWVVVMTAFVHFLLPETKKVPIEKMDIVWRDHWFWKKIIGEEAAEENNKMEAA.

The Cytoplasmic portion of the chain corresponds to 1–22; it reads MAAGLAITSEGGQYNGRMTSFV. The next 12 helical transmembrane spans lie at 23–43, 83–103, 118–128, 140–160, 169–189, 202–222, 284–304, 325–345, 349–369, 382–402, 428–448, and 451–471; these read ALSC…IGVS, SFTS…SSVT, VFLAXAALGGA, VLLG…LSEM, INNG…LINY, ISLA…LFLP, LVMA…VIAF, IVTG…VDKL, ALFI…GSIM, GYAY…GWSW, AVSF…LCHF, and GIFF…HFLL. Topologically, residues 472 to 510 are cytoplasmic; sequence PETKKVPIEKMDIVWRDHWFWKKIIGEEAAEENNKMEAA.

It belongs to the major facilitator superfamily. Sugar transporter (TC 2.A.1.1) family.

It is found in the membrane. Functionally, active uptake of hexoses. Probable glucose/hydrogen symport. In Ricinus communis (Castor bean), this protein is Hexose carrier protein HEX6 (HEX6).